The following is a 565-amino-acid chain: Sulfite reductase [NADPH] hemoprotein beta-component (565 aa).

The [4Fe-4S] cluster site is built by Cys429, Cys435, Cys474, and Cys478. Siroheme is bound at residue Cys478.

This sequence belongs to the nitrite and sulfite reductase 4Fe-4S domain family. Alpha(8)-beta(8). The alpha component is a flavoprotein, the beta component is a hemoprotein. The cofactor is siroheme. Requires [4Fe-4S] cluster as cofactor.

It catalyses the reaction hydrogen sulfide + 3 NADP(+) + 3 H2O = sulfite + 3 NADPH + 4 H(+). The protein operates within sulfur metabolism; hydrogen sulfide biosynthesis; hydrogen sulfide from sulfite (NADPH route): step 1/1. Its function is as follows. Component of the sulfite reductase complex that catalyzes the 6-electron reduction of sulfite to sulfide. This is one of several activities required for the biosynthesis of L-cysteine from sulfate. This chain is Sulfite reductase [NADPH] hemoprotein beta-component, found in Shewanella oneidensis (strain ATCC 700550 / JCM 31522 / CIP 106686 / LMG 19005 / NCIMB 14063 / MR-1).